Reading from the N-terminus, the 275-residue chain is Tropinone reductase-like 2 (275 aa).

17 to 41 (IITGGASGIGACTAELFHENGAKVV) is a binding site for NAD(+). Ser-150 serves as a coordination point for substrate. The active-site Proton acceptor is the Tyr-163.

The protein belongs to the short-chain dehydrogenases/reductases (SDR) family.

Has no tropinone reductase activity. The sequence is that of Tropinone reductase-like 2 from Erythroxylum coca (Coca plant).